The primary structure comprises 339 residues: Beta-ketoacyl-[acyl-carrier-protein] synthase III (339 aa).

Residues Cys119 and His262 contribute to the active site. Residues 263–267 (QANQR) are ACP-binding. Residue Asn292 is part of the active site.

Belongs to the thiolase-like superfamily. FabH family. Homodimer.

It localises to the cytoplasm. It carries out the reaction malonyl-[ACP] + acetyl-CoA + H(+) = 3-oxobutanoyl-[ACP] + CO2 + CoA. It participates in lipid metabolism; fatty acid biosynthesis. Catalyzes the condensation reaction of fatty acid synthesis by the addition to an acyl acceptor of two carbons from malonyl-ACP. Catalyzes the first condensation reaction which initiates fatty acid synthesis and may therefore play a role in governing the total rate of fatty acid production. Possesses both acetoacetyl-ACP synthase and acetyl transacylase activities. Its substrate specificity determines the biosynthesis of branched-chain and/or straight-chain of fatty acids. The chain is Beta-ketoacyl-[acyl-carrier-protein] synthase III from Prochlorococcus marinus (strain MIT 9313).